Consider the following 559-residue polypeptide: TBC1 domain family member 24 (559 aa).

A 1,2-diacyl-sn-glycero-3-phospho-(1D-myo-inositol) contacts are provided by residues lysine 36, arginine 40, lysine 238, arginine 242, and 293-297 (RLFSR). One can recognise a Rab-GAP TBC domain in the interval 47–262 (SHALRGKVYQ…KVRAGQPLES (216 aa)). The 212-residue stretch at 343-554 (EIVSVREMRD…IAAVEAWGFQ (212 aa)) folds into the TLDc domain. Serine 473 and serine 480 each carry phosphoserine.

As to quaternary structure, interacts with ARF6. Highest expression in brain.

It localises to the cell membrane. Its subcellular location is the cytoplasm. It is found in the cytoplasmic vesicle membrane. The protein localises to the presynapse. Functionally, may act as a GTPase-activating protein for Rab family protein(s). Involved in neuronal projections development, probably through a negative modulation of ARF6 function. Involved in the regulation of synaptic vesicle trafficking. The sequence is that of TBC1 domain family member 24 (TBC1D24) from Homo sapiens (Human).